A 92-amino-acid chain; its full sequence is Phospholemman (92 aa).

The N-terminal stretch at 1–20 is a signal peptide; it reads MAPLHHILVLCVGFLTTATA. Topologically, residues 21-35 are extracellular; the sequence is EAPQEHDPFTYDYQS. Residues 36–56 form a helical membrane-spanning segment; sequence LRIGGLIIAGILFILGILIVL. At 57–92 the chain is on the cytoplasmic side; that stretch reads SRRCRCKFNQQQRTGEPDEEEGTFRSSIRRLSTRRR. The S-palmitoyl cysteine moiety is linked to residue Cys-60. An S-glutathionyl cysteine; alternate modification is found at Cys-62. The S-palmitoyl cysteine; alternate moiety is linked to residue Cys-62. Positions 65–92 are disordered; it reads NQQQRTGEPDEEEGTFRSSIRRLSTRRR. Thr-79 bears the Phosphothreonine mark. Ser-82 carries the post-translational modification Phosphoserine. A phosphoserine; by PKA and PKC mark is found at Ser-83 and Ser-88. Positions 83–92 are enriched in basic residues; sequence SIRRLSTRRR. The residue at position 89 (Thr-89) is a Phosphothreonine; by PKC.

This sequence belongs to the FXYD family. In terms of assembly, homotetramer. Monomer. Regulatory subunit of the sodium/potassium-transporting ATPase (NKA) which is composed of a catalytic alpha subunit, a non-catalytic beta subunit and an additional regulatory subunit. The monomeric form associates with NKA while the oligomeric form does not. Interacts with the catalytic alpha-1 subunit ATP1A1. Also interacts with the catalytic alpha-2 and alpha-3 subunits ATP1A2 and ATP1A3. Very little interaction with the alpha subunits ATP1A1, ATP1A2 or ATP1A3 when phosphorylated at Ser-83. Interacts with non-catalytic beta-1 subunit ATP1B1. Oxidative stress decreases interaction with ATP1A1 but increases interaction with ATP1B1. In terms of processing, major plasma membrane substrate for cAMP-dependent protein kinase (PKA) and protein kinase C (PKC) in several different tissues. Phosphorylated in response to insulin and adrenergic stimulation. Phosphorylation at Ser-88 stimulates sodium/potassium-transporting ATPase activity while the unphosphorylated form inhibits sodium/potassium-transporting ATPase activity. Phosphorylation increases tetramerization, decreases binding to ATP1A1 and reduces inhibition of ATP1A1 activity. Phosphorylation at Ser-83 leads to greatly reduced interaction with ATP1A1, ATP1A2 and ATP1A3. May be phosphorylated by DMPK. Palmitoylation increases half-life and stability and is enhanced upon phosphorylation at Ser-88 by PKA. Present in heart, esophagus, stomach, aorta, skeletal muscle, smooth muscle, and liver but absent from brain and kidney.

The protein localises to the cell membrane. The protein resides in the sarcolemma. It localises to the apical cell membrane. Its subcellular location is the membrane. It is found in the caveola. The protein localises to the T-tubule. Its function is as follows. Associates with and regulates the activity of the sodium/potassium-transporting ATPase (NKA) which transports Na(+) out of the cell and K(+) into the cell. Inhibits NKA activity in its unphosphorylated state and stimulates activity when phosphorylated. Reduces glutathionylation of the NKA beta-1 subunit ATP1B1, thus reversing glutathionylation-mediated inhibition of ATP1B1. Contributes to female sexual development by maintaining the excitability of neurons which secrete gonadotropin-releasing hormone. The chain is Phospholemman from Canis lupus familiaris (Dog).